The following is an 87-amino-acid chain: Small ribosomal subunit protein uS15 (87 aa).

It belongs to the universal ribosomal protein uS15 family. Part of the 30S ribosomal subunit. Forms a bridge to the 50S subunit in the 70S ribosome, contacting the 23S rRNA.

In terms of biological role, one of the primary rRNA binding proteins, it binds directly to 16S rRNA where it helps nucleate assembly of the platform of the 30S subunit by binding and bridging several RNA helices of the 16S rRNA. Forms an intersubunit bridge (bridge B4) with the 23S rRNA of the 50S subunit in the ribosome. The polypeptide is Small ribosomal subunit protein uS15 (Acetivibrio thermocellus (strain ATCC 27405 / DSM 1237 / JCM 9322 / NBRC 103400 / NCIMB 10682 / NRRL B-4536 / VPI 7372) (Clostridium thermocellum)).